A 1248-amino-acid chain; its full sequence is Apoptotic protease-activating factor 1 (1248 aa).

The CARD domain occupies 1–90 (MDAKARNCLL…KDLAALLHDG (90 aa)). In terms of domain architecture, NB-ARC spans 104 to 415 (SGITSYVRTV…METEEVEDIL (312 aa)). Residues 154 to 161 (GMAGCGKS) and R265 each bind ATP. One copy of the WD 1-1 repeat lies at 613-652 (PHTDAVYHACFSEDGQRIASCGADKTLQVFKAETGEKLLE). One copy of the WD 1-2 repeat lies at 655 to 694 (AHEDEVLCCAFSTDDRFIATCSVDKKVKIWNSMTGELVHT). The WD 1-3 repeat unit spans residues 697–738 (EHSEQVNCCHFTNSSHHLLLATGSSDCFLKLWDLNQKECRNT). Residues 741–780 (GHTNSVNHCRFSPDDKLLASCSADGTLKLWDATSANERKS) form a WD 1-4 repeat. A WD 1-5 repeat occupies 796–836 (DMEVIVKCCSWSADGARIMVAAKNKIFLFDIHTSGLLGEIH). A WD 1-6 repeat occupies 838–877 (GHHSTIQYCDFSPQNHLAVVALSQYCVELWNTDSRSKVAD). The WD 1-7 repeat unit spans residues 880-910 (GHLSWVHGVMFSPDGSSFLTSSDDQTIRLWE). The interval 910 to 921 (ETKKVCKNSAVM) is interpropeller linker. Residues 922–958 (LKQEVDVVFQENEVMVLAVDHIRRLQLINGRTGQIDY) form a WD 2-1 repeat. The WD 2-2 repeat unit spans residues 959-998 (LTEAQVSCCCLSPHLQYIAFGDENGAIEILELVNNRIFQS). One copy of the WD 2-3 repeat lies at 1001–1040 (QHKKTVWHIQFTADEKTLISSSDDAEIQVWNWQLDKCIFL). The stretch at 1042-1080 (GHQETVKDFRLLKNSRLLSWSFDGTVKVWNIITGNKEKD) is one WD 2-4 repeat. The stretch at 1083-1122 (CHQGTVLSCDISHDATKFSSTSADKTAKIWSFDLLLPLHE) is one WD 2-5 repeat. The stretch at 1125-1164 (GHNGCVRCSAFSVDSTLLATGDDNGEIRIWNVSNGELLHL) is one WD 2-6 repeat. The WD 2-7 repeat unit spans residues 1175 to 1212 (THGGWVTDLCFSPDGKMLISAGGYIKWWNVVTGESSQT). A WD 2-8 repeat occupies 1213–1248 (FYTNGTNLKKIHVSPDFKTYVTVDNLGILYILQTLE).

Monomer. Oligomerizes to a heptameric ring, known as the apoptosome, upon binding of cytochrome c and dATP. Oligomeric Apaf-1 and pro-caspase-9 bind to each other via their respective NH2-terminal CARD domains and consecutively mature caspase-9 is released from the complex. Pro-caspase-3 is recruited into the Apaf-1-pro-caspase-9 complex via interaction with pro-caspase-9. Interacts with APIP. Interacts (via CARD and NACHT domains) with NAIP/BIRC1 (via NACHT domain). Interacts with CIAO2A. As to expression, ubiquitous. Highest levels of expression in adult spleen and peripheral blood leukocytes, and in fetal brain, kidney and lung. Isoform 1 is expressed in heart, kidney and liver.

It localises to the cytoplasm. Oligomeric Apaf-1 mediates the cytochrome c-dependent autocatalytic activation of pro-caspase-9 (Apaf-3), leading to the activation of caspase-3 and apoptosis. This activation requires ATP. Isoform 6 is less effective in inducing apoptosis. The chain is Apoptotic protease-activating factor 1 from Homo sapiens (Human).